A 341-amino-acid chain; its full sequence is UDP-N-acetylenolpyruvoylglucosamine reductase (341 aa).

Residues 15–185 enclose the FAD-binding PCMH-type domain; it reads LAQSCADLVE…TAVGLRLVKR (171 aa). Arg161 is a catalytic residue. The Proton donor role is filled by Ser231. Glu327 is an active-site residue.

It belongs to the MurB family. The cofactor is FAD.

It localises to the cytoplasm. It catalyses the reaction UDP-N-acetyl-alpha-D-muramate + NADP(+) = UDP-N-acetyl-3-O-(1-carboxyvinyl)-alpha-D-glucosamine + NADPH + H(+). It functions in the pathway cell wall biogenesis; peptidoglycan biosynthesis. Its function is as follows. Cell wall formation. The protein is UDP-N-acetylenolpyruvoylglucosamine reductase of Shewanella baltica (strain OS195).